The chain runs to 143 residues: Transcriptional regulator MraZ (143 aa).

2 SpoVT-AbrB domains span residues 5-47 and 76-119; these read EFQH…TLTE and AVEV…DRKL.

Belongs to the MraZ family. Forms oligomers.

Its subcellular location is the cytoplasm. The protein resides in the nucleoid. The polypeptide is Transcriptional regulator MraZ (Macrococcus caseolyticus (strain JCSC5402) (Macrococcoides caseolyticum)).